Here is a 285-residue protein sequence, read N- to C-terminus: MINKIQGFYYVESNGQVFECKLRGILKKTNNKYNCVVGDRVEISEDNSIVEIFKRDNLLIRPIVANVDYLAIQFAAKHPNIDFERINLLLLTAFYYKIKPIVIVNKIDYLTEEELVELKEKLSFLERISVPMFLISCYQNIGLEEVENFLKDKITVIGGPSGVGKSSFINFLQSERILKTGEISERLQRGKHTTRDSNMIKMKAGGYIIDTPGFSSIEVPNIENREELISLFPEFLNIDSCKFLNCSHIHEPGCNVKKQVEENKISKERYDFYKKTLEILLERWN.

Positions 56–217 (DNLLIRPIVA…IIDTPGFSSI (162 aa)) constitute a CP-type G domain. Residues 105–108 (NKID) and 159–167 (GPSGVGKSS) each bind GTP. Zn(2+)-binding residues include C241, C246, H248, and C254.

It belongs to the TRAFAC class YlqF/YawG GTPase family. RsgA subfamily. In terms of assembly, monomer. Associates with 30S ribosomal subunit, binds 16S rRNA. Zn(2+) is required as a cofactor.

It localises to the cytoplasm. Its function is as follows. One of several proteins that assist in the late maturation steps of the functional core of the 30S ribosomal subunit. Helps release RbfA from mature subunits. May play a role in the assembly of ribosomal proteins into the subunit. Circularly permuted GTPase that catalyzes slow GTP hydrolysis, GTPase activity is stimulated by the 30S ribosomal subunit. This chain is Small ribosomal subunit biogenesis GTPase RsgA, found in Fusobacterium nucleatum subsp. nucleatum (strain ATCC 25586 / DSM 15643 / BCRC 10681 / CIP 101130 / JCM 8532 / KCTC 2640 / LMG 13131 / VPI 4355).